The following is a 272-amino-acid chain: S-adenosylmethionine decarboxylase proenzyme (272 aa).

Serine 122 functions as the Schiff-base intermediate with substrate; via pyruvic acid in the catalytic mechanism. Serine 122 is modified (pyruvic acid (Ser); by autocatalysis). Histidine 127 functions as the Proton acceptor; for processing activity in the catalytic mechanism. Cysteine 150 (proton donor; for catalytic activity) is an active-site residue.

The protein belongs to the prokaryotic AdoMetDC family. Type 2 subfamily. In terms of assembly, heterooctamer of four alpha and four beta chains arranged as a tetramer of alpha/beta heterodimers. Requires pyruvate as cofactor. In terms of processing, is synthesized initially as an inactive proenzyme. Formation of the active enzyme involves a self-maturation process in which the active site pyruvoyl group is generated from an internal serine residue via an autocatalytic post-translational modification. Two non-identical subunits are generated from the proenzyme in this reaction, and the pyruvate is formed at the N-terminus of the alpha chain, which is derived from the carboxyl end of the proenzyme. The post-translation cleavage follows an unusual pathway, termed non-hydrolytic serinolysis, in which the side chain hydroxyl group of the serine supplies its oxygen atom to form the C-terminus of the beta chain, while the remainder of the serine residue undergoes an oxidative deamination to produce ammonia and the pyruvoyl group blocking the N-terminus of the alpha chain.

It catalyses the reaction S-adenosyl-L-methionine + H(+) = S-adenosyl 3-(methylsulfanyl)propylamine + CO2. Its pathway is amine and polyamine biosynthesis; S-adenosylmethioninamine biosynthesis; S-adenosylmethioninamine from S-adenosyl-L-methionine: step 1/1. In terms of biological role, catalyzes the decarboxylation of S-adenosylmethionine to S-adenosylmethioninamine (dcAdoMet), the propylamine donor required for the synthesis of the polyamines spermine and spermidine from the diamine putrescine. The protein is S-adenosylmethionine decarboxylase proenzyme of Clostridium botulinum (strain Alaska E43 / Type E3).